The primary structure comprises 259 residues: tRNA-cytidine(32) 2-sulfurtransferase (259 aa).

The PP-loop motif signature appears at 40 to 45 (SGGKDS). 3 residues coordinate [4Fe-4S] cluster: C114, C117, and C205.

The protein belongs to the TtcA family. Homodimer. It depends on Mg(2+) as a cofactor. [4Fe-4S] cluster serves as cofactor.

The protein resides in the cytoplasm. The catalysed reaction is cytidine(32) in tRNA + S-sulfanyl-L-cysteinyl-[cysteine desulfurase] + AH2 + ATP = 2-thiocytidine(32) in tRNA + L-cysteinyl-[cysteine desulfurase] + A + AMP + diphosphate + H(+). Its pathway is tRNA modification. In terms of biological role, catalyzes the ATP-dependent 2-thiolation of cytidine in position 32 of tRNA, to form 2-thiocytidine (s(2)C32). The sulfur atoms are provided by the cysteine/cysteine desulfurase (IscS) system. This Bdellovibrio bacteriovorus (strain ATCC 15356 / DSM 50701 / NCIMB 9529 / HD100) protein is tRNA-cytidine(32) 2-sulfurtransferase.